The following is a 352-amino-acid chain: SNF1-related protein kinase regulatory subunit gamma-like PV42a (352 aa).

4 CBS domains span residues 24-106 (RNRR…LSDL), 122-196 (LEGL…FDDL), 210-281 (VNDS…ELQT), and 297-352 (KERE…STLS).

This sequence belongs to the 5'-AMP-activated protein kinase gamma subunit family. In terms of tissue distribution, expressed highly in rosette leaves, cauline leaves, open flowers, developing siliques and dry seeds, but at a low level in stems and floral buds.

Plays redundant role with PV42b in regulating male gametogenesis and pollen tube guidance. The chain is SNF1-related protein kinase regulatory subunit gamma-like PV42a (PV42A) from Arabidopsis thaliana (Mouse-ear cress).